The following is a 350-amino-acid chain: Fe(2+) transport protein 2 (350 aa).

The N-terminal stretch at 1 to 21 is a signal peptide; that stretch reads MATTKLVYILLILFTFTVSPA. The Extracellular portion of the chain corresponds to 22–47; the sequence is ISTAPEHCDSGFDNPCINKAKALPLK. Residues 48-68 form a helical membrane-spanning segment; it reads IVAIVAILTTSLIGVTSPLFS. The Cytoplasmic segment spans residues 69–80; that stretch reads RYISFLRPDGNG. A helical membrane pass occupies residues 81–101; sequence FMIVKCFSSGIILGTGFMHVL. Over 102–120 the chain is Extracellular; it reads PDSFEMLSSKCLSDNPWHK. Residues 121–141 traverse the membrane as a helical segment; that stretch reads FPFAGFVAMMSGLVTLAIDSI. Residues 142–195 lie on the Cytoplasmic side of the membrane; the sequence is TTSLYTGKNSVGPVPDEEYGIDQEKAIHMVGHNHSHGHGVVLATKDDGQLLRYQ. The helical transmembrane segment at 196–216 threads the bilayer; that stretch reads VIAMVLEVGILFHSVVIGLSL. The Extracellular portion of the chain corresponds to 217–227; it reads GATNDSCTIKG. A helical membrane pass occupies residues 228 to 248; the sequence is LIIALCFHHLFEGIGLGGCIL. Topologically, residues 249–257 are cytoplasmic; that stretch reads QADFTNVKK. The helical transmembrane segment at 258–278 threads the bilayer; that stretch reads FLMAFFFTGTTPCGIFLGIAL. The Extracellular portion of the chain corresponds to 279-289; the sequence is SSIYRDNSPTA. A helical membrane pass occupies residues 290 to 310; the sequence is LITIGLLNACSAGMLIYMALV. Topologically, residues 311 to 329 are cytoplasmic; it reads DLLATEFMGSMLQGSIKLQ. The chain crosses the membrane as a helical span at residues 330–350; sequence IKCFTAALLGCAVMSVVAVWA.

The protein belongs to the ZIP transporter (TC 2.A.5) family. In terms of tissue distribution, expressed in the external cell layers of the root subapical zone.

The protein localises to the cell membrane. Its function is as follows. High-affinity iron transporter that mediates under iron-deficiency the iron uptake from the rhizosphere across the plasma membrane in the root epidermal layer. Could also be capable of transporting zinc ions. This Arabidopsis thaliana (Mouse-ear cress) protein is Fe(2+) transport protein 2 (IRT2).